Consider the following 262-residue polypeptide: Deaminated glutathione amidase (262 aa).

The 238-residue stretch at 1 to 238 (MLVAAGQFAV…PALIMAEVTP (238 aa)) folds into the CN hydrolase domain. Glutamate 40 functions as the Proton acceptor in the catalytic mechanism. Lysine 110 (proton donor) is an active-site residue. The Nucleophile role is filled by cysteine 147.

This sequence belongs to the carbon-nitrogen hydrolase superfamily. NIT1/NIT2 family.

The catalysed reaction is N-(4-oxoglutaryl)-L-cysteinylglycine + H2O = L-cysteinylglycine + 2-oxoglutarate. Its function is as follows. Hydrolyzes deaminated glutathione (dGSH) to 2-oxoglutarate and L-cysteinylglycine, and no activity on glutathione or L-glutamine. May function as a metabolite repair enzyme. This Escherichia coli O157:H7 protein is Deaminated glutathione amidase (ybeM).